Reading from the N-terminus, the 358-residue chain is MATH domain and coiled-coil domain-containing protein At3g58440 (358 aa).

The MATH domain maps to 8–131 (QDKFTWVLEK…NDRLTIVAEV (124 aa)). The stretch at 250 to 309 (LRDAGFKVDWLEKKLDQLKEKKEEEMSGLARLHEIEERLQKLKLLFVDLESQLQKEKVEA) forms a coiled coil.

This is MATH domain and coiled-coil domain-containing protein At3g58440 from Arabidopsis thaliana (Mouse-ear cress).